Consider the following 709-residue polypeptide: Polyribonucleotide nucleotidyltransferase (709 aa).

Mg(2+)-binding residues include Asp-485 and Asp-491. Residues 552 to 611 (PRIYTMKIDPKKIKDVIGKGGATIRSLTEETGTSIDIDDDGTVKIAAVDSNAAKNVMGRI) enclose the KH domain. An S1 motif domain is found at 621 to 689 (GAIYKGKVTR…RQGRIRLTMK (69 aa)).

It belongs to the polyribonucleotide nucleotidyltransferase family. In terms of assembly, component of the RNA degradosome, which is a multiprotein complex involved in RNA processing and mRNA degradation. It depends on Mg(2+) as a cofactor.

The protein resides in the cytoplasm. It catalyses the reaction RNA(n+1) + phosphate = RNA(n) + a ribonucleoside 5'-diphosphate. Functionally, involved in mRNA degradation. Catalyzes the phosphorolysis of single-stranded polyribonucleotides processively in the 3'- to 5'-direction. The polypeptide is Polyribonucleotide nucleotidyltransferase (Haemophilus influenzae (strain PittEE)).